A 100-amino-acid chain; its full sequence is Large ribosomal subunit protein bL21 (100 aa).

The protein belongs to the bacterial ribosomal protein bL21 family. Part of the 50S ribosomal subunit. Contacts protein L20.

Functionally, this protein binds to 23S rRNA in the presence of protein L20. This chain is Large ribosomal subunit protein bL21, found in Wolbachia sp. subsp. Drosophila simulans (strain wRi).